The primary structure comprises 361 residues: uncharacterized protein (361 aa).

Thr-12 is subject to Phosphothreonine.

The protein resides in the cytoplasm. It localises to the nucleus. This is an uncharacterized protein from Schizosaccharomyces pombe (strain 972 / ATCC 24843) (Fission yeast).